Consider the following 1514-residue polypeptide: Neuropathy target esterase sws (1514 aa).

At 1-34 the chain is on the lumenal side; it reads MDVLELLRASATGSYTALFSDAWCQYVSKQITNS. The helical transmembrane segment at 35–55 threads the bilayer; that stretch reads MYLYCALGVLSMVFLAWFMYF. Residues 56 to 1514 lie on the Cytoplasmic side of the membrane; the sequence is KRLARIRLRD…KGGAYNETKN (1459 aa). 175 to 302 is a binding site for a nucleoside 3',5'-cyclic phosphate; that stretch reads IFGHFEKPVF…IRVIQVIMIR (128 aa). A compositionally biased stretch (polar residues) spans 337-352; sequence STHSSQCSRQTGSQPT. The interval 337-418 is disordered; it reads STHSSQCSRQ…NPNPDVINTS (82 aa). Residues 356–374 are compositionally biased toward low complexity; the sequence is PAPTCSNTTTTASPTTANT. Serine 457 bears the Phosphoserine mark. A nucleoside 3',5'-cyclic phosphate contacts are provided by residues 515–644 and 633–760; these read ELGL…VVRR and IVLD…LSHR. The PNPLA domain maps to 987 to 1153; it reads LVLGGGGARG…VNNLPGQLWR (167 aa). The GXGXXG signature appears at 991-996; the sequence is GGGARG. The GXSXG signature appears at 1018–1022; the sequence is GVSIG. The active-site Nucleophile is the serine 1020. Aspartate 1140 serves as the catalytic Proton acceptor. Positions 1140–1142 match the DGA/G motif; that stretch reads DGG. At serine 1234 the chain carries Phosphoserine. Residues 1409-1514 form a disordered region; the sequence is EKSIHSAATS…KGGAYNETKN (106 aa). 2 stretches are compositionally biased toward basic and acidic residues: residues 1425–1449 and 1456–1470; these read RSRE…ETER and LDRK…KEPE. Residues 1471–1489 show a composition bias toward acidic residues; sequence QEQELETEEPNQENTEVEE.

It belongs to the NTE family. Interacts with Pka-C3; interaction inhibits the catalytic function of Pka-C3 and the esterase activity of sws.

Its subcellular location is the endoplasmic reticulum membrane. The catalysed reaction is a 1-acyl-sn-glycero-3-phosphocholine + H2O = sn-glycerol 3-phosphocholine + a fatty acid + H(+). In terms of biological role, phospholipase B that deacylates intracellular phosphatidylcholine (PtdCho), generating glycerophosphocholine (GroPtdCho). This deacylation occurs at both sn-2 and sn-1 positions of PtdCho. Its specific chemical modification by certain organophosphorus (OP) compounds leads to distal axonopathy. Plays a role in the signaling mechanism between neurons and glia that regulates glia wrapping during development of the adult brain. Essential for membrane lipid homeostasis and cell survival in both neurons and glia of the adult brain. This chain is Neuropathy target esterase sws, found in Drosophila ananassae (Fruit fly).